Consider the following 336-residue polypeptide: Vacuolar protein sorting-associated protein 26B (336 aa).

Serine 302, serine 304, and serine 319 each carry phosphoserine.

The protein belongs to the VPS26 family. In terms of assembly, component of the heterotrimeric retromer cargo-selective complex (CSC), also described as vacuolar protein sorting VPS subcomplex (VPS,) formed by VPS26 (VPS26A or VPS26B), VPS29 and VPS35. The CSC has a highly elongated structure with VPS26 and VPS29 binding independently at opposite distal ends of VPS35 as central platform. The CSC is believed to associate with variable sorting nexins to form functionally distinct retromer complex variants. The originally described retromer complex (also called SNX-BAR retromer) is a pentamer containing the CSC and a heterodimeric membrane-deforming subcomplex formed between SNX1 or SNX2 and SNX5 or SNX6 (also called SNX-BAR subcomplex); the respective CSC and SNX-BAR subcomplexes associate with low affinity. The CSC associates with SNX3 to form a SNX3-retromer complex. The CSC associates with SNX27, the WASH complex and the SNX-BAR subcomplex to form the SNX27-retromer complex. Interacts with VPS29, VPS35, TBC1D5, GOLPH3, SNX27.

Its subcellular location is the cytoplasm. It localises to the membrane. The protein localises to the early endosome. The protein resides in the late endosome. Functionally, acts as a component of the retromer cargo-selective complex (CSC). The CSC is believed to be the core functional component of retromer or respective retromer complex variants acting to prevent missorting of selected transmembrane cargo proteins into the lysosomal degradation pathway. The recruitment of the CSC to the endosomal membrane involves RAB7A and SNX3. The SNX-BAR retromer mediates retrograde transport of cargo proteins from endosomes to the trans-Golgi network (TGN) and is involved in endosome-to-plasma membrane transport for cargo protein recycling. The SNX3-retromer mediates the retrograde transport of WLS distinct from the SNX-BAR retromer pathway. The SNX27-retromer is believed to be involved in endosome-to-plasma membrane trafficking and recycling of a broad spectrum of cargo proteins. The CSC seems to act as recruitment hub for other proteins, such as the WASH complex and TBC1D5. May be involved in retrograde transport of SORT1 but not of IGF2R. Acts redundantly with VSP26A in SNX-27 mediated endocytic recycling of SLC2A1/GLUT1. The polypeptide is Vacuolar protein sorting-associated protein 26B (VPS26B) (Homo sapiens (Human)).